The primary structure comprises 142 residues: UPF0275 protein PM0505 (142 aa).

This sequence belongs to the UPF0275 family.

The sequence is that of UPF0275 protein PM0505 from Pasteurella multocida (strain Pm70).